The following is a 588-amino-acid chain: Pectinesterase 4 (588 aa).

Residues 1 to 24 (MIGKVVVSVASILLIVGVAIGVVA) form the signal peptide. Asn86, Asn206, and Asn342 each carry an N-linked (GlcNAc...) asparagine glycan. Substrate is bound by residues Thr353 and Gln383. Catalysis depends on Asp406, which acts as the Proton donor. Residue Asp427 is the Nucleophile of the active site. Arg496 and Trp498 together coordinate substrate.

In the N-terminal section; belongs to the PMEI family. The protein in the C-terminal section; belongs to the pectinesterase family. In terms of tissue distribution, expressed in pollen grains and pollen tubes.

It localises to the secreted. Its subcellular location is the cell wall. It catalyses the reaction [(1-&gt;4)-alpha-D-galacturonosyl methyl ester](n) + n H2O = [(1-&gt;4)-alpha-D-galacturonosyl](n) + n methanol + n H(+). It participates in glycan metabolism; pectin degradation; 2-dehydro-3-deoxy-D-gluconate from pectin: step 1/5. Its function is as follows. Acts in the modification of cell walls via demethylesterification of cell wall pectin. Plays an important role in growth of pollen tubes in female floral tissues, possibly via enhancing the interaction between the pollen tube and female floral tissues by modification of the cell walls. The polypeptide is Pectinesterase 4 (PME4) (Arabidopsis thaliana (Mouse-ear cress)).